We begin with the raw amino-acid sequence, 1485 residues long: Glutamate receptor ionotropic, NMDA 2B (1485 aa).

A signal peptide spans 1–26; sequence MKPRAECCSPKFWLVLAVLAVSGSRA. Residues 27–557 are Extracellular-facing; that stretch reads RSQKSPPSIG…SAFLEPFSAD (531 aa). A glycan (N-linked (GlcNAc...) asparagine) is linked at N74. A disulfide bridge links C86 with C321. Positions 127 and 284 each coordinate Zn(2+). Residues N341, N348, N444, and N491 are each glycosylated (N-linked (GlcNAc...) asparagine). Intrachain disulfides connect C429–C456 and C436–C457. 2 residues coordinate L-glutamate: T514 and R519. A glycan (N-linked (GlcNAc...) asparagine) is linked at N542. Residues 558-576 form a helical membrane-spanning segment; sequence VWVMMFVMLLIVSAVAVFV. Over 577–603 the chain is Cytoplasmic; it reads FEYFSPVGYNRCLADGREPGGPSFTIG. The discontinuously helical intramembrane region spans 604–623; that stretch reads KAIWLLWGLVFNNSVPVQNP. A pore-forming region spans residues 604–623; that stretch reads KAIWLLWGLVFNNSVPVQNP. The Cytoplasmic segment spans residues 624-630; that stretch reads KGTTSKI. Residues 631-646 traverse the membrane as a helical segment; the sequence is MVSVWAFFAVIFLASY. The Extracellular portion of the chain corresponds to 647–817; that stretch reads TANLAAFMIQ…VMSSQLDIDN (171 aa). An N-linked (GlcNAc...) asparagine glycan is attached at N688. L-glutamate-binding positions include 690–691 and D732; that span reads ST. Residues C746 and C801 are joined by a disulfide bond. The chain crosses the membrane as a helical span at residues 818–837; sequence MAGVFYMLGAAMALSLITFI. Residues 838 to 1485 lie on the Cytoplasmic side of the membrane; sequence CEHLFYWQFR…EKLSSIESDV (648 aa). Phosphoserine occurs at positions 882, 886, 917, and 920. Phosphotyrosine is present on residues Y962 and Y1039. Phosphoserine is present on residues S1058, S1061, and S1064. The disordered stretch occupies residues 1074 to 1097; sequence EGNAAKRRKQQYKDSLKKRPASAK. Y1109 and Y1133 each carry phosphotyrosine. S1143 bears the Phosphoserine mark. Y1155 is modified (phosphotyrosine). The interval 1162–1194 is disordered; the sequence is FKRDSVSGGGPCTNRSHLKHGAGDKHGVVSGVP. Residues S1255 and S1259 each carry the phosphoserine modification. Residues 1269 to 1278 are compositionally biased toward low complexity; the sequence is PVAVPSNAPS. The segment at 1269–1302 is disordered; the sequence is PVAVPSNAPSTKYPQSPTNSKAQKKTRNKLRRQH. Residues 1280–1289 show a composition bias toward polar residues; it reads KYPQSPTNSK. Basic residues predominate over residues 1290–1301; sequence AQKKTRNKLRRQ. The segment at 1292–1304 is interaction with DAPK1; that stretch reads KKTRNKLRRQHSY. S1303 is modified (phosphoserine; by DAPK1). Phosphotyrosine is present on Y1475. Residues 1483 to 1485 carry the PDZ-binding motif; that stretch reads SDV.

This sequence belongs to the glutamate-gated ion channel (TC 1.A.10.1) family. NR2B/GRIN2B subfamily. Heterotetramer. Forms heterotetrameric channels composed of two GluN1/zeta subunits (GRIN1), and two identical GluN2/epsilon subunits (GRIN2A, GRIN2B, GRIN2C or GRIN2D) or GluN3 subunits (GRIN3A or GRIN3B) (in vitro). Can also form heterotetrameric channels that contain at least two GluN1 subunits and at least two different GluN2 subunits (or a combination of one GluN2 and one GluN3 subunits) (in vitro). In vivo, the subunit composition may depend on the expression levels of the different subunits. Found in a complex with GRIN1, GRIN3A and PPP2CB. Found in a complex with GRIN1 and GRIN3B. Interacts with MAGI3. Interacts with HIP1 and Neto1. Interacts with PDZ domains of PATJ, DLG3 and DLG4. Interacts with DAPK1. Found in a complex with GRIN1 and PRR7. Interacts with PRR7. Interacts with CAMK2A. Interacts with ARC; preventing ARC oligomerization. Interacts with TMEM25. Interacts (via the extreme C-terminus) with FRMPD2 (via the second PDZ domain); the interaction is direct and is likely to promote NMDAR-mediated neural signal transmission. Interacts with FAM81A; the interaction facilitates condensate formation via liquid-liquid phase separation. Phosphorylated on tyrosine residues. Phosphorylation at Ser-1303 by DAPK1 enhances synaptic NMDA receptor channel activity.

It localises to the cell membrane. It is found in the postsynaptic cell membrane. The protein resides in the cell projection. The protein localises to the dendrite. Its subcellular location is the late endosome. It localises to the lysosome. It is found in the cytoplasm. The protein resides in the cytoskeleton. It catalyses the reaction Ca(2+)(in) = Ca(2+)(out). It carries out the reaction Na(+)(in) = Na(+)(out). The enzyme catalyses K(+)(in) = K(+)(out). Its function is as follows. Component of N-methyl-D-aspartate (NMDA) receptors (NMDARs) that function as heterotetrameric, ligand-gated cation channels with high calcium permeability and voltage-dependent block by Mg(2+). Participates in synaptic plasticity for learning and memory formation by contributing to the long-term depression (LTD) of hippocampus membrane currents. Channel activation requires binding of the neurotransmitter L-glutamate to the GluN2 subunit, glycine or D-serine binding to the GluN1 subunit, plus membrane depolarization to eliminate channel inhibition by Mg(2+). NMDARs mediate simultaneously the potasium efflux and the influx of calcium and sodium. Each GluN2 subunit confers differential attributes to channel properties, including activation, deactivation and desensitization kinetics, pH sensitivity, Ca2(+) permeability, and binding to allosteric modulators. In concert with DAPK1 at extrasynaptic sites, acts as a central mediator for stroke damage. Its phosphorylation at Ser-1303 by DAPK1 enhances synaptic NMDA receptor channel activity inducing injurious Ca2+ influx through them, resulting in an irreversible neuronal death. The protein is Glutamate receptor ionotropic, NMDA 2B of Canis lupus familiaris (Dog).